A 185-amino-acid polypeptide reads, in one-letter code: ATP synthase subunit b 2 (185 aa).

The interval 1–24 is disordered; it reads MADSHGNAKGATAHTEAGGGHKAP. A helical transmembrane segment spans residues 34–56; that stretch reads ASQLVSLTIAFVALYLISSRLAL.

This sequence belongs to the ATPase B chain family. F-type ATPases have 2 components, F(1) - the catalytic core - and F(0) - the membrane proton channel. F(1) has five subunits: alpha(3), beta(3), gamma(1), delta(1), epsilon(1). F(0) has three main subunits: a(1), b(2) and c(10-14). The alpha and beta chains form an alternating ring which encloses part of the gamma chain. F(1) is attached to F(0) by a central stalk formed by the gamma and epsilon chains, while a peripheral stalk is formed by the delta and b chains.

It localises to the cell inner membrane. In terms of biological role, f(1)F(0) ATP synthase produces ATP from ADP in the presence of a proton or sodium gradient. F-type ATPases consist of two structural domains, F(1) containing the extramembraneous catalytic core and F(0) containing the membrane proton channel, linked together by a central stalk and a peripheral stalk. During catalysis, ATP synthesis in the catalytic domain of F(1) is coupled via a rotary mechanism of the central stalk subunits to proton translocation. Functionally, component of the F(0) channel, it forms part of the peripheral stalk, linking F(1) to F(0). The b'-subunit is a diverged and duplicated form of b found in plants and photosynthetic bacteria. In Nitrobacter hamburgensis (strain DSM 10229 / NCIMB 13809 / X14), this protein is ATP synthase subunit b 2 (atpF2).